Reading from the N-terminus, the 427-residue chain is Glutamate-1-semialdehyde 2,1-aminomutase (427 aa).

Lys265 bears the N6-(pyridoxal phosphate)lysine mark.

The protein belongs to the class-III pyridoxal-phosphate-dependent aminotransferase family. HemL subfamily. In terms of assembly, homodimer. The cofactor is pyridoxal 5'-phosphate.

The protein localises to the cytoplasm. The catalysed reaction is (S)-4-amino-5-oxopentanoate = 5-aminolevulinate. It participates in porphyrin-containing compound metabolism; protoporphyrin-IX biosynthesis; 5-aminolevulinate from L-glutamyl-tRNA(Glu): step 2/2. This Photorhabdus laumondii subsp. laumondii (strain DSM 15139 / CIP 105565 / TT01) (Photorhabdus luminescens subsp. laumondii) protein is Glutamate-1-semialdehyde 2,1-aminomutase.